A 202-amino-acid polypeptide reads, in one-letter code: Ribosome biogenesis regulatory protein homolog (202 aa).

Positions 82-103 (TLPPPTTPLPREKPVPQPKPET) are disordered.

This sequence belongs to the RRS1 family. As to quaternary structure, component of a hexameric 5S RNP precursor complex, composed of 5S RNA, RRS1, RPF2, RPL5, RPL11 and SYO1; this complex acts as a precursor for ribosome assembly.

The protein localises to the nucleus. In terms of biological role, involved in ribosomal large subunit assembly. The polypeptide is Ribosome biogenesis regulatory protein homolog (Chaetomium thermophilum (strain DSM 1495 / CBS 144.50 / IMI 039719) (Thermochaetoides thermophila)).